Consider the following 71-residue polypeptide: Large ribosomal subunit protein uL29 (71 aa).

Belongs to the universal ribosomal protein uL29 family.

In Rickettsia massiliae (strain Mtu5), this protein is Large ribosomal subunit protein uL29.